Consider the following 106-residue polypeptide: Gibberellin-regulated protein 12 (106 aa).

Positions 1–22 (MMKLIVVFVISSLLFATQFSNG) are cleaved as a signal peptide.

Belongs to the GASA family. Post-translationally, six disulfide bonds may be present.

It is found in the secreted. Gibberellin-regulated protein that may function in hormonal controlled steps of development such as seed germination, flowering and seed maturation. This Arabidopsis thaliana (Mouse-ear cress) protein is Gibberellin-regulated protein 12 (GASA12).